Consider the following 559-residue polypeptide: Leucine-rich repeat-containing protein 71 (559 aa).

The span at 1–18 (MSSEQSAPGASPRAPRPG) shows a compositional bias: low complexity. The interval 1–56 (MSSEQSAPGASPRAPRPGTQKSSGAVTKKGERAAKEKPATVLPPVGEEEPKSPEEY) is disordered. Over residues 28-38 (KKGERAAKEKP) the composition is skewed to basic and acidic residues. 5 LRR repeats span residues 172–193 (NLWK…LPLC), 196–216 (TLRK…HKLM), 221–241 (TIAH…QLLG), 253–266 (TLVS…HIGD), and 281–302 (SLLW…KLAE). Basic and acidic residues-rich tracts occupy residues 324 to 348 (KGTQ…REKS) and 380 to 391 (KSWELAKKEEKL). The disordered stretch occupies residues 324–427 (KGTQERSRSP…PEQKPSRAKG (104 aa)).

This Homo sapiens (Human) protein is Leucine-rich repeat-containing protein 71 (LRRC71).